The chain runs to 380 residues: Flap endonuclease 1 (380 aa).

An N-domain region spans residues 1–104 (MGIQGLAKLI…GELAKRSERR (104 aa)). Arg19 bears the Symmetric dimethylarginine; by PRMT5 mark. Asp34 lines the Mg(2+) pocket. Positions 47 and 70 each coordinate DNA. Lys80 bears the N6-acetyllysine mark. A Mg(2+)-binding site is contributed by Asp86. Symmetric dimethylarginine; by PRMT5 is present on residues Arg100 and Arg104. The segment at 122–253 (EVEKFTKRLV…KRAVDLIQKH (132 aa)) is I-domain. Glu158, Glu160, Asp179, and Asp181 together coordinate Mg(2+). DNA is bound at residue Glu158. Residue Ser187 is modified to Phosphoserine; by CDK2. The residue at position 192 (Arg192) is a Symmetric dimethylarginine; by PRMT5. Ser197 carries the phosphoserine modification. DNA is bound by residues Gly231 and Asp233. Position 233 (Asp233) interacts with Mg(2+). Residues Ser255, Ser293, and Ser335 each carry the phosphoserine modification. Thr336 carries the post-translational modification Phosphothreonine. Residues 336-344 (TQGRLDDFF) form an interaction with PCNA region. Positions 349 to 380 (SLSSAKRKEPEPKGAAKKKQRLGPAGKFKRGK) are disordered. N6-acetyllysine is present on residues Lys354, Lys375, Lys377, and Lys380. Positions 363 to 380 (AAKKKQRLGPAGKFKRGK) are enriched in basic residues.

It belongs to the XPG/RAD2 endonuclease family. FEN1 subfamily. In terms of assembly, interacts with PCNA. Three molecules of FEN1 bind to one PCNA trimer with each molecule binding to one PCNA monomer. PCNA stimulates the nuclease activity without altering cleavage specificity. The C-terminal domain binds EP300; can bind simultaneously to both PCNA and EP300. Interacts with DDX11; this interaction is direct and increases flap endonuclease activity of FEN1. Interacts with WDR4; regulating its endonuclease activity. Interacts with POLB. The cofactor is Mg(2+). In terms of processing, acetylated by EP300. Acetylation inhibits both endonuclease and exonuclease activity. Acetylation also reduces DNA-binding activity but does not affect interaction with PCNA or EP300. Post-translationally, phosphorylation upon DNA damage induces relocalization to the nuclear plasma. Phosphorylation at Ser-187 by CDK2 occurs during late S-phase and results in dissociation from PCNA. Methylation at Arg-192 by PRMT5 impedes Ser-187 phosphorylation and increases interaction with PCNA.

The protein resides in the nucleus. It is found in the nucleolus. The protein localises to the nucleoplasm. Its subcellular location is the mitochondrion. Functionally, structure-specific nuclease with 5'-flap endonuclease and 5'-3' exonuclease activities involved in DNA replication and repair. During DNA replication, cleaves the 5'-overhanging flap structure that is generated by displacement synthesis when DNA polymerase encounters the 5'-end of a downstream Okazaki fragment. It enters the flap from the 5'-end and then tracks to cleave the flap base, leaving a nick for ligation. Also involved in the long patch base excision repair (LP-BER) pathway, by cleaving within the apurinic/apyrimidinic (AP) site-terminated flap. Acts as a genome stabilization factor that prevents flaps from equilibrating into structures that lead to duplications and deletions. Also possesses 5'-3' exonuclease activity on nicked or gapped double-stranded DNA, and exhibits RNase H activity. Also involved in replication and repair of rDNA and in repairing mitochondrial DNA. The sequence is that of Flap endonuclease 1 from Ovis aries (Sheep).